Consider the following 155-residue polypeptide: UPF0266 membrane protein lin0773 (155 aa).

3 consecutive transmembrane segments (helical) span residues 8 to 28 (IFLF…DAVI), 46 to 66 (RWDG…NTFF), and 70 to 90 (PFST…ICFF).

It belongs to the UPF0266 family.

Its subcellular location is the cell membrane. The protein is UPF0266 membrane protein lin0773 of Listeria innocua serovar 6a (strain ATCC BAA-680 / CLIP 11262).